A 205-amino-acid polypeptide reads, in one-letter code: Small heat shock protein hspG12 (205 aa).

A sHSP domain is found at 35 to 205 (KTIIDILPPM…YSNTIKININ (171 aa)). Residues 99–147 (PSLLDTKEDEASIEEFDEDDIKPKSTETTSTLSNSKENKKDENKSKSTE) are disordered. Residues 109–118 (ASIEEFDEDD) are compositionally biased toward acidic residues. Basic and acidic residues predominate over residues 134 to 147 (KENKKDENKSKSTE).

This sequence belongs to the small heat shock protein (HSP20) family.

This chain is Small heat shock protein hspG12 (hspG12), found in Dictyostelium discoideum (Social amoeba).